The sequence spans 289 residues: BTB/POZ domain-containing protein KCTD7 (289 aa).

Residues 1-10 are compositionally biased toward polar residues; that stretch reads MVVVTGQSKG. A disordered region spans residues 1-35; it reads MVVVTGQSKGSGDPDEAMSSSDAEDDFQEPATPTA. Positions 51-149 constitute a BTB domain; the sequence is EVVPLNVGGM…HLEDVQPLKG (99 aa).

It localises to the cell membrane. The protein localises to the cytoplasm. It is found in the cytosol. May be involved in the control of excitability of cortical neurons. The sequence is that of BTB/POZ domain-containing protein KCTD7 (KCTD7) from Gallus gallus (Chicken).